The chain runs to 701 residues: Polyribonucleotide nucleotidyltransferase (701 aa).

Mg(2+) contacts are provided by aspartate 485 and aspartate 491. The KH domain maps to 552 to 611; that stretch reads PKTQIMSINPDKIRDVIGAGGKVINKIIQDTGVKIDIKEDGTVFVSSTDHNGVNEAIKII. In terms of domain architecture, S1 motif spans 621–689; it reads GEVYLGKVTK…NQGRINLSRK (69 aa).

This sequence belongs to the polyribonucleotide nucleotidyltransferase family. It depends on Mg(2+) as a cofactor.

The protein resides in the cytoplasm. The catalysed reaction is RNA(n+1) + phosphate = RNA(n) + a ribonucleoside 5'-diphosphate. In terms of biological role, involved in mRNA degradation. Catalyzes the phosphorolysis of single-stranded polyribonucleotides processively in the 3'- to 5'-direction. In Clostridium beijerinckii (strain ATCC 51743 / NCIMB 8052) (Clostridium acetobutylicum), this protein is Polyribonucleotide nucleotidyltransferase.